Reading from the N-terminus, the 166-residue chain is Phospholipase A2 inhibitor A4/A5 (166 aa).

Residues 1-19 form the signal peptide; sequence MRLILLSGLLLLGTFLVNG. Residues 46 to 161 enclose the C-type lectin domain; the sequence is LFHAFLTVHK…CDDNLLVVCE (116 aa). Disulfide bonds link cysteine 83/cysteine 160 and cysteine 138/cysteine 152. N-linked (GlcNAc...) asparagine glycosylation is present at asparagine 122.

This sequence belongs to the alpha-type phospholipase A2 inhibitor family. In terms of assembly, homotrimer; non-covalently linked. As to expression, expressed by the liver.

Its subcellular location is the secreted. In terms of biological role, this phospholipase A2 inhibitor binds directly phospholipase A2 in the presence or absence of calcium. This is Phospholipase A2 inhibitor A4/A5 from Crotalus durissus terrificus (South American rattlesnake).